The sequence spans 326 residues: Thrombopoietin (326 aa).

Residues 1–21 (MELTDLLLVAILLLTARLTLS) form the signal peptide. 2 disulfide bridges follow: Cys28–Cys172 and Cys50–Cys106. N-linked (GlcNAc...) asparagine glycans are attached at residues Asn197, Asn206, Asn235, Asn249, and Asn256. A disordered region spans residues 307 to 326 (FPPSPTFPTPGSPPQLPPVS). Residues 308-326 (PPSPTFPTPGSPPQLPPVS) are compositionally biased toward pro residues.

The protein belongs to the EPO/TPO family.

Its subcellular location is the secreted. In terms of biological role, lineage-specific cytokine affecting the proliferation and maturation of megakaryocytes from their committed progenitor cells. It acts at a late stage of megakaryocyte development. It may be the major physiological regulator of circulating platelets. The polypeptide is Thrombopoietin (Thpo) (Rattus norvegicus (Rat)).